Here is a 140-residue protein sequence, read N- to C-terminus: Protein SamA (140 aa).

Catalysis depends on for autocatalytic cleavage activity residues serine 61 and lysine 98.

This sequence belongs to the peptidase S24 family.

In terms of biological role, involved in UV protection and mutation. This Salmonella typhimurium (strain LT2 / SGSC1412 / ATCC 700720) protein is Protein SamA (samA).